We begin with the raw amino-acid sequence, 154 residues long: D-aminoacyl-tRNA deacylase (154 aa).

Residues 138 to 139 (GP) carry the Gly-cisPro motif, important for rejection of L-amino acids motif.

The protein belongs to the DTD family. In terms of assembly, homodimer.

Its subcellular location is the cytoplasm. The enzyme catalyses glycyl-tRNA(Ala) + H2O = tRNA(Ala) + glycine + H(+). It carries out the reaction a D-aminoacyl-tRNA + H2O = a tRNA + a D-alpha-amino acid + H(+). An aminoacyl-tRNA editing enzyme that deacylates mischarged D-aminoacyl-tRNAs. Also deacylates mischarged glycyl-tRNA(Ala), protecting cells against glycine mischarging by AlaRS. Acts via tRNA-based rather than protein-based catalysis; rejects L-amino acids rather than detecting D-amino acids in the active site. By recycling D-aminoacyl-tRNA to D-amino acids and free tRNA molecules, this enzyme counteracts the toxicity associated with the formation of D-aminoacyl-tRNA entities in vivo and helps enforce protein L-homochirality. In Halorhodospira halophila (strain DSM 244 / SL1) (Ectothiorhodospira halophila (strain DSM 244 / SL1)), this protein is D-aminoacyl-tRNA deacylase.